The following is a 105-amino-acid chain: Nucleoid-associated protein MW0434 (105 aa).

Positions 1–33 (MRGGGNMQQMMKQMQKMQKKMAQEQEKLKEERI) are disordered. Positions 7–16 (MQQMMKQMQK) are enriched in low complexity. The span at 21–33 (MAQEQEKLKEERI) shows a compositional bias: basic and acidic residues.

It belongs to the YbaB/EbfC family. Homodimer.

The protein localises to the cytoplasm. It localises to the nucleoid. In terms of biological role, binds to DNA and alters its conformation. May be involved in regulation of gene expression, nucleoid organization and DNA protection. The chain is Nucleoid-associated protein MW0434 from Staphylococcus aureus (strain MW2).